A 307-amino-acid chain; its full sequence is Acetaldehyde dehydrogenase 2 (307 aa).

Ser13 to Ile16 provides a ligand contact to NAD(+). The active-site Acyl-thioester intermediate is Cys132. NAD(+)-binding positions include Ser163–Asn171 and Asn274.

The protein belongs to the acetaldehyde dehydrogenase family.

It catalyses the reaction acetaldehyde + NAD(+) + CoA = acetyl-CoA + NADH + H(+). This chain is Acetaldehyde dehydrogenase 2, found in Methylibium petroleiphilum (strain ATCC BAA-1232 / LMG 22953 / PM1).